The chain runs to 622 residues: Chaperone protein HtpG (622 aa).

Residues 1 to 322 form an a; substrate-binding region; sequence MTEAKNYEFQ…SEDLPLNISR (322 aa). A b region spans residues 323–539; it reads QSLQDNALVS…DGFMSASMER (217 aa). Positions 540–622 are c; sequence VLAASRKEQG…KILDRAVSRA (83 aa).

Belongs to the heat shock protein 90 family. In terms of assembly, homodimer.

It localises to the cytoplasm. Functionally, molecular chaperone. Has ATPase activity. This is Chaperone protein HtpG from Desulfotalea psychrophila (strain LSv54 / DSM 12343).